A 500-amino-acid polypeptide reads, in one-letter code: Glycerol kinase (500 aa).

ADP is bound at residue threonine 11. Residues threonine 11, threonine 12, and serine 13 each contribute to the ATP site. Residue threonine 11 coordinates sn-glycerol 3-phosphate. Arginine 15 is an ADP binding site. The sn-glycerol 3-phosphate site is built by arginine 81, glutamate 82, tyrosine 133, and aspartate 242. Arginine 81, glutamate 82, tyrosine 133, aspartate 242, and glutamine 243 together coordinate glycerol. ADP contacts are provided by threonine 264 and glycine 307. Threonine 264, glycine 307, glutamine 311, and glycine 411 together coordinate ATP. Glycine 411 provides a ligand contact to ADP.

Belongs to the FGGY kinase family.

It carries out the reaction glycerol + ATP = sn-glycerol 3-phosphate + ADP + H(+). It participates in polyol metabolism; glycerol degradation via glycerol kinase pathway; sn-glycerol 3-phosphate from glycerol: step 1/1. Inhibited by fructose 1,6-bisphosphate (FBP). In terms of biological role, key enzyme in the regulation of glycerol uptake and metabolism. Catalyzes the phosphorylation of glycerol to yield sn-glycerol 3-phosphate. The chain is Glycerol kinase from Rhodopseudomonas palustris (strain ATCC BAA-98 / CGA009).